The sequence spans 362 residues: Glutamate--cysteine ligase (362 aa).

Belongs to the glutamate--cysteine ligase type 2 family. YbdK subfamily.

The catalysed reaction is L-cysteine + L-glutamate + ATP = gamma-L-glutamyl-L-cysteine + ADP + phosphate + H(+). Functionally, catalyzes the synthesis of gamma-glutamylcysteine (gamma-GC), the main low-molecular-weight thiol compound instead of glutathione in halophilic archaea. This is Glutamate--cysteine ligase from Natronomonas pharaonis (strain ATCC 35678 / DSM 2160 / CIP 103997 / JCM 8858 / NBRC 14720 / NCIMB 2260 / Gabara) (Halobacterium pharaonis).